A 189-amino-acid polypeptide reads, in one-letter code: UPF0301 protein A1E_00140 (189 aa).

The protein belongs to the UPF0301 (AlgH) family.

This chain is UPF0301 protein A1E_00140, found in Rickettsia canadensis (strain McKiel).